Reading from the N-terminus, the 417-residue chain is Tryptophan synthase beta chain (417 aa).

N6-(pyridoxal phosphate)lysine is present on lysine 99.

Belongs to the TrpB family. Tetramer of two alpha and two beta chains. Pyridoxal 5'-phosphate is required as a cofactor.

The enzyme catalyses (1S,2R)-1-C-(indol-3-yl)glycerol 3-phosphate + L-serine = D-glyceraldehyde 3-phosphate + L-tryptophan + H2O. It participates in amino-acid biosynthesis; L-tryptophan biosynthesis; L-tryptophan from chorismate: step 5/5. Functionally, the beta subunit is responsible for the synthesis of L-tryptophan from indole and L-serine. This chain is Tryptophan synthase beta chain, found in Corynebacterium glutamicum (strain R).